Consider the following 225-residue polypeptide: uncharacterized protein (225 aa).

This is an uncharacterized protein from Mycoplasma pneumoniae (strain ATCC 29342 / M129 / Subtype 1) (Mycoplasmoides pneumoniae).